Reading from the N-terminus, the 365-residue chain is Caffeic acid 3-O-methyltransferase (365 aa).

A (E)-ferulate-binding site is contributed by N131. G208, D231, D251, M252, M264, and K265 together coordinate S-adenosyl-L-homocysteine. H269 functions as the Proton acceptor in the catalytic mechanism. D270 contacts (E)-5-hydroxyferulate. Active-site residues include E297 and E329.

Belongs to the class I-like SAM-binding methyltransferase superfamily. Cation-independent O-methyltransferase family. COMT subfamily. Homodimer. As to expression, more abundant in roots and stems.

The catalysed reaction is (E)-caffeate + S-adenosyl-L-methionine = (E)-ferulate + S-adenosyl-L-homocysteine + H(+). It catalyses the reaction (E)-5-hydroxyferulate + S-adenosyl-L-methionine = (E)-sinapate + S-adenosyl-L-homocysteine + H(+). Its pathway is aromatic compound metabolism; phenylpropanoid biosynthesis. Functionally, catalyzes the conversion of caffeic acid to ferulic acid and of 5-hydroxyferulic acid to sinapic acid. The resulting products may subsequently be converted to the corresponding alcohols that are incorporated into lignins. This is Caffeic acid 3-O-methyltransferase from Medicago sativa (Alfalfa).